The following is a 238-amino-acid chain: Endonuclease V (238 aa).

Asp46 and Asp116 together coordinate Mg(2+).

This sequence belongs to the endonuclease V family. Requires Mg(2+) as cofactor.

It localises to the cytoplasm. It carries out the reaction Endonucleolytic cleavage at apurinic or apyrimidinic sites to products with a 5'-phosphate.. In terms of biological role, DNA repair enzyme involved in the repair of deaminated bases. Selectively cleaves double-stranded DNA at the second phosphodiester bond 3' to a deoxyinosine leaving behind the intact lesion on the nicked DNA. The polypeptide is Endonuclease V (Bacillus velezensis (strain DSM 23117 / BGSC 10A6 / LMG 26770 / FZB42) (Bacillus amyloliquefaciens subsp. plantarum)).